Here is a 303-residue protein sequence, read N- to C-terminus: Glycine--tRNA ligase alpha subunit (303 aa).

This sequence belongs to the class-II aminoacyl-tRNA synthetase family. In terms of assembly, tetramer of two alpha and two beta subunits.

The protein resides in the cytoplasm. The enzyme catalyses tRNA(Gly) + glycine + ATP = glycyl-tRNA(Gly) + AMP + diphosphate. This is Glycine--tRNA ligase alpha subunit (glyQ) from Escherichia coli (strain K12).